The following is a 387-amino-acid chain: GTPase Obg (387 aa).

In terms of domain architecture, Obg spans 1–159 (MKFVDEAVIR…RSLRLELMLL (159 aa)). The 174-residue stretch at 160 to 333 (ADVGLLGMPN…LALKLMDFID (174 aa)) folds into the OBG-type G domain. GTP-binding positions include 166 to 173 (GMPNAGKS), 191 to 195 (FTTLV), 213 to 216 (DIPG), 283 to 286 (NKTD), and 314 to 316 (SAY). Mg(2+)-binding residues include Ser-173 and Thr-193.

It belongs to the TRAFAC class OBG-HflX-like GTPase superfamily. OBG GTPase family. In terms of assembly, monomer. The cofactor is Mg(2+).

It localises to the cytoplasm. Its function is as follows. An essential GTPase which binds GTP, GDP and possibly (p)ppGpp with moderate affinity, with high nucleotide exchange rates and a fairly low GTP hydrolysis rate. Plays a role in control of the cell cycle, stress response, ribosome biogenesis and in those bacteria that undergo differentiation, in morphogenesis control. This Shewanella loihica (strain ATCC BAA-1088 / PV-4) protein is GTPase Obg.